The following is a 727-amino-acid chain: ABC transporter G family member 6 (727 aa).

An ABC transporter domain is found at 68–333; that stretch reads LSFTDLTYSV…FAEFGHPIPE (266 aa). 126 to 133 is an ATP binding site; the sequence is GASGSGKS. In terms of domain architecture, ABC transmembrane type-2 spans 421–631; the sequence is VELAVLAKRS…PYEAVLLNEF (211 aa). 6 helical membrane passes run 440–460, 475–495, 517–537, 560–580, 581–601, and 700–720; these read LFGI…TMFW, CFAF…PVFL, LSHS…FAAI, ASFW…PHVM, LGYT…GFFI, and LWVT…SLLL.

This sequence belongs to the ABC transporter superfamily. ABCG family. Eye pigment precursor importer (TC 3.A.1.204) subfamily.

It is found in the membrane. The protein is ABC transporter G family member 6 (ABCG6) of Arabidopsis thaliana (Mouse-ear cress).